The primary structure comprises 242 residues: Ubiquinone biosynthesis O-methyltransferase (242 aa).

4 residues coordinate S-adenosyl-L-methionine: arginine 44, glycine 64, aspartate 85, and methionine 129.

The protein belongs to the methyltransferase superfamily. UbiG/COQ3 family.

The catalysed reaction is a 3-demethylubiquinol + S-adenosyl-L-methionine = a ubiquinol + S-adenosyl-L-homocysteine + H(+). It catalyses the reaction a 3-(all-trans-polyprenyl)benzene-1,2-diol + S-adenosyl-L-methionine = a 2-methoxy-6-(all-trans-polyprenyl)phenol + S-adenosyl-L-homocysteine + H(+). Its pathway is cofactor biosynthesis; ubiquinone biosynthesis. In terms of biological role, O-methyltransferase that catalyzes the 2 O-methylation steps in the ubiquinone biosynthetic pathway. This is Ubiquinone biosynthesis O-methyltransferase from Yersinia pseudotuberculosis serotype O:1b (strain IP 31758).